The following is a 599-amino-acid chain: Translation initiation factor IF-2 (599 aa).

The region spanning 111 to 278 (PRPPIITVMG…SILLLAEILE (168 aa)) is the tr-type G domain. Residues 120–127 (GHVDHGKT) are G1. 120-127 (GHVDHGKT) contacts GTP. The tract at residues 145–149 (GITQH) is G2. Residues 166–169 (DTPG) are G3. Residues 166 to 170 (DTPGH) and 220 to 223 (NKMD) each bind GTP. Positions 220–223 (NKMD) are G4. Positions 256 to 258 (SAL) are G5.

The protein belongs to the TRAFAC class translation factor GTPase superfamily. Classic translation factor GTPase family. IF-2 subfamily.

Its subcellular location is the cytoplasm. In terms of biological role, one of the essential components for the initiation of protein synthesis. Protects formylmethionyl-tRNA from spontaneous hydrolysis and promotes its binding to the 30S ribosomal subunits. Also involved in the hydrolysis of GTP during the formation of the 70S ribosomal complex. This Mesomycoplasma hyopneumoniae (strain 7448) (Mycoplasma hyopneumoniae) protein is Translation initiation factor IF-2.